A 221-amino-acid chain; its full sequence is ATP phosphoribosyltransferase (221 aa).

The protein belongs to the ATP phosphoribosyltransferase family. Short subfamily. In terms of assembly, heteromultimer composed of HisG and HisZ subunits.

The protein localises to the cytoplasm. The catalysed reaction is 1-(5-phospho-beta-D-ribosyl)-ATP + diphosphate = 5-phospho-alpha-D-ribose 1-diphosphate + ATP. Its pathway is amino-acid biosynthesis; L-histidine biosynthesis; L-histidine from 5-phospho-alpha-D-ribose 1-diphosphate: step 1/9. Functionally, catalyzes the condensation of ATP and 5-phosphoribose 1-diphosphate to form N'-(5'-phosphoribosyl)-ATP (PR-ATP). Has a crucial role in the pathway because the rate of histidine biosynthesis seems to be controlled primarily by regulation of HisG enzymatic activity. The chain is ATP phosphoribosyltransferase from Anaeromyxobacter sp. (strain K).